Reading from the N-terminus, the 149-residue chain is Flagellar assembly factor FliW (149 aa).

This sequence belongs to the FliW family. As to quaternary structure, interacts with translational regulator CsrA and flagellin(s).

Its subcellular location is the cytoplasm. Its function is as follows. Acts as an anti-CsrA protein, binds CsrA and prevents it from repressing translation of its target genes, one of which is flagellin. Binds to flagellin and participates in the assembly of the flagellum. The chain is Flagellar assembly factor FliW from Thermotoga sp. (strain RQ2).